The following is a 194-amino-acid chain: Translation machinery-associated protein 22 (194 aa).

Residues 102 to 173 enclose the SUI1 domain; it reads VQIKRVERNK…DVQEWLLEVY (72 aa).

Belongs to the DENR family. In terms of assembly, interacts with the 40S ribosomal subunit.

Its subcellular location is the cytoplasm. This is Translation machinery-associated protein 22 (tma22) from Aspergillus clavatus (strain ATCC 1007 / CBS 513.65 / DSM 816 / NCTC 3887 / NRRL 1 / QM 1276 / 107).